The following is a 139-amino-acid chain: MLMPKRVKHRKVMRGKMKGNAGRGTTVTFGTYALKALEPAWITSRQIEAARVAMNRFMKRDGKIWIRIFPDKPVTKKPAETRMGSGKGNPEFWVAVVKPGRIMFEAEGVSQEVATEAFRLAAKKLPIKTKFIVRPEHEG.

Belongs to the universal ribosomal protein uL16 family. In terms of assembly, part of the 50S ribosomal subunit.

In terms of biological role, binds 23S rRNA and is also seen to make contacts with the A and possibly P site tRNAs. This is Large ribosomal subunit protein uL16 from Prosthecochloris aestuarii (strain DSM 271 / SK 413).